The sequence spans 198 residues: Putative transposase InsO for insertion sequence element IS911B (198 aa).

The region spanning 105–198 is the Integrase catalytic domain; it reads AVTEPNQVWC…YCGDTGSGRV (94 aa).

Its function is as follows. Involved in the transposition of the insertion sequence IS911B. This is Putative transposase InsO for insertion sequence element IS911B (insO2) from Escherichia coli (strain K12).